The following is a 177-amino-acid chain: Large ribosomal subunit protein uL6 (177 aa).

Belongs to the universal ribosomal protein uL6 family. As to quaternary structure, part of the 50S ribosomal subunit.

Its function is as follows. This protein binds to the 23S rRNA, and is important in its secondary structure. It is located near the subunit interface in the base of the L7/L12 stalk, and near the tRNA binding site of the peptidyltransferase center. This Klebsiella pneumoniae (strain 342) protein is Large ribosomal subunit protein uL6.